Here is a 304-residue protein sequence, read N- to C-terminus: MNKEIQQAKHSKNINKPFTDKDSIRVSVLSEALPYIQRFANKRIVIKYGGSAMADKTLQNAVFRDLALLSSVGVQIVVVHGGGPEINQWLEKLGIKPVFLDGLRITDTETMDVVEMVLTGRVNKQIVSGINNHGRLAVGLCGIDGGLIEARTLGGGSHGLVGEVAKVNTKILSPLLEEGYVPVISSVANSSDGKSHNINADTVAGELAAALGAEKLILLTDTPGILRNENDPSSLIEKIRLSEARELIDKGIVKAGMKPKVECCIRSLAQGVNAAHIIDGRTPHSLLLEVFTDAGIGTMVMGRG.

Residues G82–G83, R104, and N197 contribute to the substrate site.

The protein belongs to the acetylglutamate kinase family. ArgB subfamily.

The protein resides in the cytoplasm. It carries out the reaction N-acetyl-L-glutamate + ATP = N-acetyl-L-glutamyl 5-phosphate + ADP. It participates in amino-acid biosynthesis; L-arginine biosynthesis; N(2)-acetyl-L-ornithine from L-glutamate: step 2/4. Catalyzes the ATP-dependent phosphorylation of N-acetyl-L-glutamate. This is Acetylglutamate kinase from Prochlorococcus marinus (strain NATL2A).